The sequence spans 306 residues: Armadillo repeat-containing protein 10 (306 aa).

The helical transmembrane segment at valine 7–arginine 29 threads the bilayer. Residue serine 43 is modified to Phosphoserine. Residue threonine 48 is modified to Phosphothreonine. One copy of the ARM repeat lies at glycine 101 to arginine 143.

In terms of assembly, interacts with the DNA-binding domain of p53/TP53.

The protein resides in the endoplasmic reticulum membrane. Its subcellular location is the mitochondrion outer membrane. Its function is as follows. May play a role in cell survival and cell growth. May suppress the transcriptional activity of p53/TP53. In Rattus norvegicus (Rat), this protein is Armadillo repeat-containing protein 10 (Armc10).